Reading from the N-terminus, the 653-residue chain is Chaperone protein DnaK (653 aa).

Residue threonine 198 is modified to Phosphothreonine; by autocatalysis. Over residues 608-617 (DPEAAAHAAG) the composition is skewed to low complexity. The segment at 608 to 653 (DPEAAAHAAGMHGGAATGGGDGANKHGKGAEDVVEAEFEEVNDDKK) is disordered. Residues 618 to 629 (MHGGAATGGGDG) show a composition bias toward gly residues. Acidic residues predominate over residues 639-653 (DVVEAEFEEVNDDKK).

Belongs to the heat shock protein 70 family.

Its function is as follows. Acts as a chaperone. The polypeptide is Chaperone protein DnaK (Magnetococcus marinus (strain ATCC BAA-1437 / JCM 17883 / MC-1)).